The chain runs to 515 residues: Na(+)/H(+) antiporter NhaB (515 aa).

Helical transmembrane passes span 23–43 (LAII…NPFV), 45–65 (GWLL…CYPL), 96–116 (VVLL…LLLF), 136–156 (CLAS…AVVI), 204–224 (LMMH…VGEP), 245–265 (APIT…VEHF), 305–325 (ALIG…VGLI), 349–369 (FEEA…VAVI), 393–413 (LFYL…VGTV), 449–469 (ATPN…SPLI), and 480–500 (ALPY…FLLI).

This sequence belongs to the NhaB Na(+)/H(+) (TC 2.A.34) antiporter family.

Its subcellular location is the cell inner membrane. It catalyses the reaction 2 Na(+)(in) + 3 H(+)(out) = 2 Na(+)(out) + 3 H(+)(in). In terms of biological role, na(+)/H(+) antiporter that extrudes sodium in exchange for external protons. In Photorhabdus laumondii subsp. laumondii (strain DSM 15139 / CIP 105565 / TT01) (Photorhabdus luminescens subsp. laumondii), this protein is Na(+)/H(+) antiporter NhaB.